The following is a 465-amino-acid chain: Cysteine--tRNA ligase (465 aa).

Cysteine 29 contacts Zn(2+). The short motif at 31 to 41 (PTVYNYIHIGN) is the 'HIGH' region element. Cysteine 209, histidine 234, and glutamate 238 together coordinate Zn(2+). Residues 266-270 (KMSKS) carry the 'KMSKS' region motif. Lysine 269 is an ATP binding site. At serine 270 the chain carries Phosphoserine.

Belongs to the class-I aminoacyl-tRNA synthetase family. Monomer. Zn(2+) is required as a cofactor.

It is found in the cytoplasm. It carries out the reaction tRNA(Cys) + L-cysteine + ATP = L-cysteinyl-tRNA(Cys) + AMP + diphosphate. The polypeptide is Cysteine--tRNA ligase (Bacillus cereus (strain B4264)).